Consider the following 410-residue polypeptide: Beta-arrestin-1 (410 aa).

The interaction with SRC stretch occupies residues 1 to 163 (MGDKGTRVFK…LEEKIHKRNS (163 aa)). The interaction with CHRM2 stretch occupies residues 45–86 (PEYLKERRVYVTLTCAFRYGREDLDVLGLTFRKDLFVANVQS). Tyrosine 47 is subject to Phosphotyrosine. 4 residues coordinate 1D-myo-inositol hexakisphosphate: lysine 250, methionine 255, lysine 324, and lysine 326. The interval 318 to 410 (IVSYKVKVKL…GTGSPQLNNR (93 aa)) is interaction with TRAF6. The [DE]-X(1,2)-F-X-X-[FL]-X-X-X-R motif signature appears at 385–395 (RQRLKGMKDDK). The tract at residues 389 to 410 (KGMKDDKEEEENGTGSPQLNNR) is disordered. Polar residues predominate over residues 401-410 (GTGSPQLNNR). Serine 404 carries the phosphoserine; by GRK5 modification.

Belongs to the arrestin family. As to quaternary structure, monomer. Homodimer. Homooligomer; the self-association is mediated by InsP6-binding. Heterooligomer with ARRB2; the association is mediated by InsP6-binding. Interacts with ADRB2 (phosphorylated). Interacts with CHRM2 (phosphorylated). Interacts with LHCGR. Interacts with CYTH2 and CASR. Interacts with AP2B1 (dephosphorylated); phosphorylation of AP2B1 disrupts the interaction. Interacts (dephosphorylated at Ser-404) with CLTC. Interacts with CCR2 and GRK2. Interacts with CRR5. Interacts with PTAFR (phosphorylated on serine residues). Interacts with CLTC and MAP2K3. Interacts with CREB1. Interacts with TRAF6. Interacts with IGF1R and MDM2. Interacts with C5AR1. Interacts with PDE4D. Interacts with SRC (via the SH3 domain and the protein kinase domain); the interaction is independent of the phosphorylation state of SRC C-terminus. Interacts with TACR1. Interacts with RAF1. Interacts with CHUK, IKBKB and MAP3K14. Interacts with DVL1; the interaction is enhanced by phosphorylation of DVL1. Interacts with DVL2; the interaction is enhanced by phosphorylation of DVL2. Interacts with IGF1R. Associates with MAP kinase p38. Part of a MAPK signaling complex consisting of TACR1, ARRB1, SRC, MAPK1 (activated) and MAPK3 (activated). Part of a MAPK signaling complex consisting of F2RL1, ARRB1, RAF1, MAPK1 (activated) and MAPK3 (activated). Interacts with GPR143. Interacts with MAP2K4/MKK4. Interacts with HCK and CXCR1 (phosphorylated). Interacts with ACKR3 and ACKR4. Interacts with ARRDC1; the interaction is direct. Interacts with GPR61, GPR62 and GPR135. In terms of processing, constitutively phosphorylated at in the cytoplasm. At the plasma membrane, is rapidly dephosphorylated, a process that is required for clathrin binding and ADRB2 endocytosis but not for ADRB2 binding and desensitization. Once internalized, is rephosphorylated. The ubiquitination status appears to regulate the formation and trafficking of beta-arrestin-GPCR complexes and signaling. Ubiquitination appears to occur GPCR-specific. Ubiquitinated by MDM2; the ubiquitination is required for rapid internalization of ADRB2. Deubiquitinated by USP33; the deubiquitination leads to a dissociation of the beta-arrestin-GPCR complex. Stimulation of a class A GPCR, such as ADRB2, induces transient ubiquitination and subsequently promotes association with USP33.

It localises to the cytoplasm. It is found in the nucleus. Its subcellular location is the cell membrane. The protein localises to the membrane. The protein resides in the clathrin-coated pit. It localises to the cell projection. It is found in the pseudopodium. Its subcellular location is the cytoplasmic vesicle. In terms of biological role, functions in regulating agonist-mediated G-protein coupled receptor (GPCR) signaling by mediating both receptor desensitization and resensitization processes. During homologous desensitization, beta-arrestins bind to the GPRK-phosphorylated receptor and sterically preclude its coupling to the cognate G-protein; the binding appears to require additional receptor determinants exposed only in the active receptor conformation. The beta-arrestins target many receptors for internalization by acting as endocytic adapters (CLASPs, clathrin-associated sorting proteins) and recruiting the GPRCs to the adapter protein 2 complex 2 (AP-2) in clathrin-coated pits (CCPs). However, the extent of beta-arrestin involvement appears to vary significantly depending on the receptor, agonist and cell type. Internalized arrestin-receptor complexes traffic to intracellular endosomes, where they remain uncoupled from G-proteins. Two different modes of arrestin-mediated internalization occur. Class A receptors, like ADRB2, OPRM1, ENDRA, D1AR and ADRA1B dissociate from beta-arrestin at or near the plasma membrane and undergo rapid recycling. Class B receptors, like AVPR2, AGTR1, NTSR1, TRHR and TACR1 internalize as a complex with arrestin and traffic with it to endosomal vesicles, presumably as desensitized receptors, for extended periods of time. Receptor resensitization then requires that receptor-bound arrestin is removed so that the receptor can be dephosphorylated and returned to the plasma membrane. Involved in internalization of P2RY4 and UTP-stimulated internalization of P2RY2. Involved in phosphorylation-dependent internalization of OPRD1 ands subsequent recycling. Involved in the degradation of cAMP by recruiting cAMP phosphodiesterases to ligand-activated receptors. Beta-arrestins function as multivalent adapter proteins that can switch the GPCR from a G-protein signaling mode that transmits short-lived signals from the plasma membrane via small molecule second messengers and ion channels to a beta-arrestin signaling mode that transmits a distinct set of signals that are initiated as the receptor internalizes and transits the intracellular compartment. Acts as a signaling scaffold for MAPK pathways such as MAPK1/3 (ERK1/2). ERK1/2 activated by the beta-arrestin scaffold is largely excluded from the nucleus and confined to cytoplasmic locations such as endocytic vesicles, also called beta-arrestin signalosomes. Recruits c-Src/SRC to ADRB2 resulting in ERK activation. GPCRs for which the beta-arrestin-mediated signaling relies on both ARRB1 and ARRB2 (codependent regulation) include ADRB2, F2RL1 and PTH1R. For some GPCRs the beta-arrestin-mediated signaling relies on either ARRB1 or ARRB2 and is inhibited by the other respective beta-arrestin form (reciprocal regulation). Inhibits ERK1/2 signaling in AGTR1- and AVPR2-mediated activation (reciprocal regulation). Is required for SP-stimulated endocytosis of NK1R and recruits c-Src/SRC to internalized NK1R resulting in ERK1/2 activation, which is required for the antiapoptotic effects of SP. Is involved in proteinase-activated F2RL1-mediated ERK activity. Acts as a signaling scaffold for the AKT1 pathway. Is involved in alpha-thrombin-stimulated AKT1 signaling. Is involved in IGF1-stimulated AKT1 signaling leading to increased protection from apoptosis. Involved in activation of the p38 MAPK signaling pathway and in actin bundle formation. Involved in F2RL1-mediated cytoskeletal rearrangement and chemotaxis. Involved in AGTR1-mediated stress fiber formation by acting together with GNAQ to activate RHOA. Appears to function as signaling scaffold involved in regulation of MIP-1-beta-stimulated CCR5-dependent chemotaxis. Involved in attenuation of NF-kappa-B-dependent transcription in response to GPCR or cytokine stimulation by interacting with and stabilizing CHUK. May serve as nuclear messenger for GPCRs. Involved in OPRD1-stimulated transcriptional regulation by translocating to CDKN1B and FOS promoter regions and recruiting EP300 resulting in acetylation of histone H4. Involved in regulation of LEF1 transcriptional activity via interaction with DVL1 and/or DVL2 Also involved in regulation of receptors other than GPCRs. Involved in Toll-like receptor and IL-1 receptor signaling through the interaction with TRAF6 which prevents TRAF6 autoubiquitination and oligomerization required for activation of NF-kappa-B and JUN. Involved in IL8-mediated granule release in neutrophils. Binds phosphoinositides. Binds inositolhexakisphosphate (InsP6). Required for atypical chemokine receptor ACKR2-induced RAC1-LIMK1-PAK1-dependent phosphorylation of cofilin (CFL1) and for the up-regulation of ACKR2 from endosomal compartment to cell membrane, increasing its efficiency in chemokine uptake and degradation. Involved in the internalization of the atypical chemokine receptor ACKR3. Negatively regulates the NOTCH signaling pathway by mediating the ubiquitination and degradation of NOTCH1 by ITCH. Participates in the recruitment of the ubiquitin-protein ligase to the receptor. The polypeptide is Beta-arrestin-1 (ARRB1) (Macaca fascicularis (Crab-eating macaque)).